Here is a 523-residue protein sequence, read N- to C-terminus: GMP synthase [glutamine-hydrolyzing] (523 aa).

The Glutamine amidotransferase type-1 domain maps to 8–205 (KILILDFGSQ…VVGICGCECK (198 aa)). The active-site Nucleophile is C85. Catalysis depends on residues H179 and E181. Residues 206–398 (WTAENIIEDA…LGLPAEMLNR (193 aa)) form the GMPS ATP-PPase domain. 233 to 239 (SGGVDSS) is an ATP binding site.

As to quaternary structure, homodimer.

The enzyme catalyses XMP + L-glutamine + ATP + H2O = GMP + L-glutamate + AMP + diphosphate + 2 H(+). Its pathway is purine metabolism; GMP biosynthesis; GMP from XMP (L-Gln route): step 1/1. Catalyzes the synthesis of GMP from XMP. This is GMP synthase [glutamine-hydrolyzing] from Actinobacillus pleuropneumoniae serotype 3 (strain JL03).